The following is a 413-amino-acid chain: MGNYYYGGQESRLERISWRMWMVEAACYIVLVLLTLVSSFASLSSTTGFPCFVGTVGESSFGGDLMGHGMTPARRDGVKIFFMSSPSTLFVVFSAVFVWLVVAVYLLLGGVRVKMCNFDSSYGASELSSAVATMTSLVTLSITAWAWQVFVLMLSYRQLTLAAVAFVGIFIAGLVFMLSFASGGKSPENYATFNSQLKTVCKDVHAVITAFKAVVLNLFCVVFGVWHLMLVMLGAVIMVLNFGVSIPKATTGALVVFIVLGLVYLMMIELVVSRYVHVLLGPHLGMIIALGIAGTSALSYAETLDEIMYASWKPVAAGILGAFSVIVLALAVLRAVRSYKFHKAAQSKFLQQVASVAQTVKNRARRERNGPRVHKRYYDAVPVDAYEDDPYRQSPRRSRHGEAEDVIYENMKY.

At 1–19 the chain is on the intravirion side; it reads MGNYYYGGQESRLERISWR. Residues 20–40 form a helical membrane-spanning segment; that stretch reads MWMVEAACYIVLVLLTLVSSF. Topologically, residues 41-88 are virion surface; the sequence is ASLSSTTGFPCFVGTVGESSFGGDLMGHGMTPARRDGVKIFFMSSPST. Residues 89–109 traverse the membrane as a helical segment; that stretch reads LFVVFSAVFVWLVVAVYLLLG. Residues 110–133 lie on the Intravirion side of the membrane; the sequence is GVRVKMCNFDSSYGASELSSAVAT. The helical transmembrane segment at 134–154 threads the bilayer; sequence MTSLVTLSITAWAWQVFVLML. Topologically, residues 155 to 160 are virion surface; sequence SYRQLT. Residues 161–181 form a helical membrane-spanning segment; that stretch reads LAAVAFVGIFIAGLVFMLSFA. Topologically, residues 182-218 are intravirion; it reads SGGKSPENYATFNSQLKTVCKDVHAVITAFKAVVLNL. A helical transmembrane segment spans residues 219–239; the sequence is FCVVFGVWHLMLVMLGAVIMV. The Virion surface segment spans residues 240–251; that stretch reads LNFGVSIPKATT. The helical transmembrane segment at 252–272 threads the bilayer; that stretch reads GALVVFIVLGLVYLMMIELVV. Over 273–277 the chain is Intravirion; sequence SRYVH. The chain crosses the membrane as a helical span at residues 278–298; that stretch reads VLLGPHLGMIIALGIAGTSAL. At 299 to 312 the chain is on the virion surface side; the sequence is SYAETLDEIMYASW. The chain crosses the membrane as a helical span at residues 313–333; the sequence is KPVAAGILGAFSVIVLALAVL. At 334-413 the chain is on the intravirion side; it reads RAVRSYKFHK…EDVIYENMKY (80 aa).

This sequence belongs to the herpesviridae glycoprotein M family. In terms of assembly, interacts (via N-terminus) with gN (via N-terminus). The gM-gN heterodimer forms the gCII complex.

Its subcellular location is the virion membrane. It localises to the host Golgi apparatus. The protein localises to the host trans-Golgi network. It is found in the host endosome membrane. The protein resides in the host nucleus inner membrane. Envelope glycoprotein important for virion assembly and egress. Plays a role in the correct incorporation of gH-gL into virion membrane. Directs the glycoprotein N (gN) to the host trans-Golgi network. The protein is Envelope glycoprotein M of Psittacid herpesvirus 1 (isolate Amazon parrot/-/97-0001/1997) (PsHV-1).